The primary structure comprises 328 residues: Ribosomal RNA small subunit methyltransferase H (328 aa).

Residues 37 to 39 (GGH), aspartate 57, phenylalanine 83, aspartate 104, and glutamine 111 each bind S-adenosyl-L-methionine.

This sequence belongs to the methyltransferase superfamily. RsmH family.

The protein resides in the cytoplasm. The catalysed reaction is cytidine(1402) in 16S rRNA + S-adenosyl-L-methionine = N(4)-methylcytidine(1402) in 16S rRNA + S-adenosyl-L-homocysteine + H(+). In terms of biological role, specifically methylates the N4 position of cytidine in position 1402 (C1402) of 16S rRNA. This is Ribosomal RNA small subunit methyltransferase H from Neisseria meningitidis serogroup B (strain ATCC BAA-335 / MC58).